Consider the following 411-residue polypeptide: Ornithine aminotransferase (411 aa).

Lys-257 is subject to N6-(pyridoxal phosphate)lysine.

Belongs to the class-III pyridoxal-phosphate-dependent aminotransferase family. OAT subfamily. Pyridoxal 5'-phosphate serves as cofactor.

It is found in the cytoplasm. It carries out the reaction a 2-oxocarboxylate + L-ornithine = L-glutamate 5-semialdehyde + an L-alpha-amino acid. It functions in the pathway amino-acid biosynthesis; L-proline biosynthesis; L-glutamate 5-semialdehyde from L-ornithine: step 1/1. In terms of biological role, catalyzes the interconversion of ornithine to glutamate semialdehyde. This chain is Ornithine aminotransferase, found in Bordetella bronchiseptica (strain ATCC BAA-588 / NCTC 13252 / RB50) (Alcaligenes bronchisepticus).